The chain runs to 445 residues: Adenine permease AdeP (445 aa).

Over 1–28 (MSHQHTTQTSGQGMLERVFKLREHGTTA) the chain is Cytoplasmic. The chain crosses the membrane as a helical span at residues 29–52 (RTEVIAGFTTFLTMVYIVFVNPQI). Topologically, residues 53-62 (LGVAGMDTSA) are periplasmic. The chain crosses the membrane as a helical span at residues 63 to 81 (VFVTTCLIAAFGSIMMGLF). Residues 82–83 (AN) are Cytoplasmic-facing. A discontinuously helical transmembrane segment spans residues 84–100 (LPVALAPAMGLNAFFAF). Residues 101–112 (VVVQAMGLPWQV) lie on the Periplasmic side of the membrane. A helical membrane pass occupies residues 113 to 132 (GMGAIFWGAIGLLLLTIFRV). Topologically, residues 133–144 (RYWMIANIPVSL) are cytoplasmic. Residues 145–165 (RVGITSGIGLFIGMMGLKNAG) form a helical membrane-spanning segment. Topologically, residues 166 to 181 (VIVANPETLVSIGNLT) are periplasmic. The helical transmembrane segment at 182 to 199 (SHSVLLGILGFFIIAILA) threads the bilayer. The Cytoplasmic portion of the chain corresponds to 200–203 (SRNI). The chain crosses the membrane as a helical span at residues 204-222 (HAAVLVSIVVTTLLGWMLG). The Periplasmic portion of the chain corresponds to 223–250 (DVHYNGIVSAPPSVMTVVGHVDLAGSFN). A helical transmembrane segment spans residues 251–279 (LGLAGVIFSFMLVNLFDSSGTLIGVTDKA). Topologically, residues 280-292 (GLADEKGKFPRMK) are cytoplasmic. Residues 293 to 308 (QALYVDSISSVTGSFI) traverse the membrane as a helical segment. At 309–310 (GT) the chain is on the periplasmic side. Residues 311–326 (SSVTAYIESSSGVSVG) traverse the membrane as a discontinuously helical segment. Over 327–330 (GRTG) the chain is Cytoplasmic. Residues 331–345 (LTAVVVGLLFLLVIF) traverse the membrane as a helical segment. Residues 346–356 (LSPLAGMVPGY) lie on the Periplasmic side of the membrane. A helical membrane pass occupies residues 357–376 (AAAGALIYVGVLMTSSLARV). Topologically, residues 377–381 (NWQDL) are cytoplasmic. Residues 382–417 (TESVPAFITAVMMPFSFSITEGIALGFISYCVMKIG) constitute an intramembrane region (discontinuously helical). The Cytoplasmic segment spans residues 418 to 445 (TGRLRDLSPCVIIVALLFILKIVFIDAH).

This sequence belongs to the nucleobase:cation symporter-2 (NCS2) (TC 2.A.40) family. Azg-like subfamily.

The protein resides in the cell inner membrane. Internal adenine may inhibit transport. Functionally, high-affinity transporter for adenine. In Escherichia coli (strain K12), this protein is Adenine permease AdeP (adeP).